We begin with the raw amino-acid sequence, 266 residues long: MPDVTLTTLQGLKQSGEKIAMLTCYDATFAHTASQAGVDVLLVGDSLGMVLQGHDSTLPVSNEEMAYHTACVKRGNKGSLIVTDLAFESSHSVAQTLADAVRLMQAGAHMVKLEGGVWLAEPIARLAQMGVPVCAHLGLTPQAVNLFGGFKVQGRQETQARQLRADAIALEQAGAAMLLLECVPSVLAEEITQAVKIPVIGIGAGAATDGQVLVMHDMLGLSLTGRSPKFVKDFMQGQESIPAAIAAYVRAVKDVSFPAAEHGFNA.

Residues aspartate 45 and aspartate 84 each contribute to the Mg(2+) site. 3-methyl-2-oxobutanoate-binding positions include 45–46 (DS), aspartate 84, and lysine 112. A Mg(2+)-binding site is contributed by glutamate 114. Residue glutamate 181 is the Proton acceptor of the active site.

Belongs to the PanB family. In terms of assembly, homodecamer; pentamer of dimers. Mg(2+) is required as a cofactor.

Its subcellular location is the cytoplasm. It catalyses the reaction 3-methyl-2-oxobutanoate + (6R)-5,10-methylene-5,6,7,8-tetrahydrofolate + H2O = 2-dehydropantoate + (6S)-5,6,7,8-tetrahydrofolate. It participates in cofactor biosynthesis; (R)-pantothenate biosynthesis; (R)-pantoate from 3-methyl-2-oxobutanoate: step 1/2. Functionally, catalyzes the reversible reaction in which hydroxymethyl group from 5,10-methylenetetrahydrofolate is transferred onto alpha-ketoisovalerate to form ketopantoate. The chain is 3-methyl-2-oxobutanoate hydroxymethyltransferase 2 from Pseudomonas aeruginosa (strain ATCC 15692 / DSM 22644 / CIP 104116 / JCM 14847 / LMG 12228 / 1C / PRS 101 / PAO1).